The primary structure comprises 423 residues: Gamma-glutamyl phosphate reductase (423 aa).

Belongs to the gamma-glutamyl phosphate reductase family.

Its subcellular location is the cytoplasm. It catalyses the reaction L-glutamate 5-semialdehyde + phosphate + NADP(+) = L-glutamyl 5-phosphate + NADPH + H(+). Its pathway is amino-acid biosynthesis; L-proline biosynthesis; L-glutamate 5-semialdehyde from L-glutamate: step 2/2. Catalyzes the NADPH-dependent reduction of L-glutamate 5-phosphate into L-glutamate 5-semialdehyde and phosphate. The product spontaneously undergoes cyclization to form 1-pyrroline-5-carboxylate. The chain is Gamma-glutamyl phosphate reductase from Burkholderia orbicola (strain AU 1054).